Reading from the N-terminus, the 196-residue chain is Peptidyl-tRNA hydrolase (196 aa).

Residue Y17 participates in tRNA binding. The active-site Proton acceptor is the H22. TRNA is bound by residues F68, N70, and N116.

The protein belongs to the PTH family. Monomer.

The protein resides in the cytoplasm. The enzyme catalyses an N-acyl-L-alpha-aminoacyl-tRNA + H2O = an N-acyl-L-amino acid + a tRNA + H(+). Hydrolyzes ribosome-free peptidyl-tRNAs (with 1 or more amino acids incorporated), which drop off the ribosome during protein synthesis, or as a result of ribosome stalling. Functionally, catalyzes the release of premature peptidyl moieties from peptidyl-tRNA molecules trapped in stalled 50S ribosomal subunits, and thus maintains levels of free tRNAs and 50S ribosomes. In Yersinia pseudotuberculosis serotype O:1b (strain IP 31758), this protein is Peptidyl-tRNA hydrolase.